A 256-amino-acid chain; its full sequence is Membrane-anchored junction protein (256 aa).

The Nuclear segment spans residues 1–232; sequence MSLKPFTYPF…HSSPPPPKEP (232 aa). 2 disordered regions span residues 143-197 and 211-235; these read KRKL…TPAS and HGLQ…PGAR. The segment covering 164-173 has biased composition (polar residues); that stretch reads ETSSEASSNK. Over residues 175–184 the composition is skewed to basic and acidic residues; it reads PLKESKRSTD. A helical transmembrane segment spans residues 233–251; that stretch reads GARGFLGFLSALFPFRYFF. Residues 252–256 are Perinuclear space-facing; the sequence is KKSGQ.

The protein belongs to the MAJIN family. As to quaternary structure, component of the MAJIN-TERB1-TERB2 complex, composed of MAJIN, TERB1 and TERB2. Specifically expressed in germline tissues.

It is found in the nucleus inner membrane. Its subcellular location is the chromosome. The protein resides in the telomere. Meiosis-specific telomere-associated protein involved in meiotic telomere attachment to the nucleus inner membrane, a crucial step for homologous pairing and synapsis. Component of the MAJIN-TERB1-TERB2 complex, which promotes telomere cap exchange by mediating attachment of telomeric DNA to the inner nuclear membrane and replacement of the protective cap of telomeric chromosomes: in early meiosis, the MAJIN-TERB1-TERB2 complex associates with telomeric DNA and the shelterin/telosome complex. During prophase, the complex matures and promotes release of the shelterin/telosome complex from telomeric DNA. In the complex, MAJIN acts as the anchoring subunit to the nucleus inner membrane. MAJIN shows DNA-binding activity, possibly for the stabilization of telomere attachment on the nucleus inner membrane. The chain is Membrane-anchored junction protein from Mus musculus (Mouse).